A 301-amino-acid polypeptide reads, in one-letter code: tRNA pseudouridine synthase B (301 aa).

Residue Asp-48 is the Nucleophile of the active site.

Belongs to the pseudouridine synthase TruB family. Type 1 subfamily.

It carries out the reaction uridine(55) in tRNA = pseudouridine(55) in tRNA. In terms of biological role, responsible for synthesis of pseudouridine from uracil-55 in the psi GC loop of transfer RNAs. This chain is tRNA pseudouridine synthase B, found in Mycobacterium ulcerans (strain Agy99).